A 221-amino-acid polypeptide reads, in one-letter code: Large ribosomal subunit protein uL3 (221 aa).

It belongs to the universal ribosomal protein uL3 family. As to quaternary structure, part of the 50S ribosomal subunit. Forms a cluster with proteins L14 and L19.

In terms of biological role, one of the primary rRNA binding proteins, it binds directly near the 3'-end of the 23S rRNA, where it nucleates assembly of the 50S subunit. The sequence is that of Large ribosomal subunit protein uL3 from Chlamydia abortus (strain DSM 27085 / S26/3) (Chlamydophila abortus).